The following is a 104-amino-acid chain: Large ribosomal subunit protein uL24 (104 aa).

The protein belongs to the universal ribosomal protein uL24 family. Part of the 50S ribosomal subunit.

Its function is as follows. One of two assembly initiator proteins, it binds directly to the 5'-end of the 23S rRNA, where it nucleates assembly of the 50S subunit. Functionally, one of the proteins that surrounds the polypeptide exit tunnel on the outside of the subunit. This chain is Large ribosomal subunit protein uL24, found in Clostridium botulinum (strain Alaska E43 / Type E3).